The sequence spans 544 residues: Chaperonin GroEL (544 aa).

Residues 30–33 (TLGP), Lys-51, 87–91 (DGTTT), Gly-415, 480–482 (DAA), and Asp-496 each bind ATP.

This sequence belongs to the chaperonin (HSP60) family. In terms of assembly, forms a cylinder of 14 subunits composed of two heptameric rings stacked back-to-back. Interacts with the co-chaperonin GroES.

It is found in the cytoplasm. It carries out the reaction ATP + H2O + a folded polypeptide = ADP + phosphate + an unfolded polypeptide.. Together with its co-chaperonin GroES, plays an essential role in assisting protein folding. The GroEL-GroES system forms a nano-cage that allows encapsulation of the non-native substrate proteins and provides a physical environment optimized to promote and accelerate protein folding. The sequence is that of Chaperonin GroEL from Sulfurihydrogenibium sp. (strain YO3AOP1).